We begin with the raw amino-acid sequence, 643 residues long: 1-deoxy-D-xylulose-5-phosphate synthase (643 aa).

Residues His-78 and 119-121 (AHS) contribute to the thiamine diphosphate site. Asp-150 lines the Mg(2+) pocket. Residues 151 to 152 (GS), Asn-179, Tyr-288, and Glu-370 each bind thiamine diphosphate. Asn-179 is a Mg(2+) binding site.

It belongs to the transketolase family. DXPS subfamily. In terms of assembly, homodimer. It depends on Mg(2+) as a cofactor. Thiamine diphosphate is required as a cofactor.

The enzyme catalyses D-glyceraldehyde 3-phosphate + pyruvate + H(+) = 1-deoxy-D-xylulose 5-phosphate + CO2. It functions in the pathway metabolic intermediate biosynthesis; 1-deoxy-D-xylulose 5-phosphate biosynthesis; 1-deoxy-D-xylulose 5-phosphate from D-glyceraldehyde 3-phosphate and pyruvate: step 1/1. Functionally, catalyzes the acyloin condensation reaction between C atoms 2 and 3 of pyruvate and glyceraldehyde 3-phosphate to yield 1-deoxy-D-xylulose-5-phosphate (DXP). The chain is 1-deoxy-D-xylulose-5-phosphate synthase from Brucella ovis (strain ATCC 25840 / 63/290 / NCTC 10512).